A 284-amino-acid chain; its full sequence is Tropomyosin Per a 7.0103 (284 aa).

A coiled-coil region spans residues 1-266 (MDAIKKKMQA…EDELVHEKEK (266 aa)).

It belongs to the tropomyosin family. In terms of assembly, homodimer.

Tropomyosin, in association with the troponin complex, plays a central role in the calcium dependent regulation of muscle contraction. This is Tropomyosin Per a 7.0103 from Periplaneta americana (American cockroach).